The following is a 361-amino-acid chain: sn-glycerol-3-phosphate import ATP-binding protein UgpC (361 aa).

Residues L4–I235 enclose the ABC transporter domain. G37–S44 contacts ATP.

It belongs to the ABC transporter superfamily. sn-glycerol-3-phosphate importer (TC 3.A.1.1.3) family. In terms of assembly, the complex is composed of two ATP-binding proteins (UgpC), two transmembrane proteins (UgpA and UgpE) and a solute-binding protein (UgpB).

Its subcellular location is the cell inner membrane. The catalysed reaction is sn-glycerol 3-phosphate(out) + ATP + H2O = sn-glycerol 3-phosphate(in) + ADP + phosphate + H(+). Functionally, part of the ABC transporter complex UgpBAEC involved in sn-glycerol-3-phosphate (G3P) import. Responsible for energy coupling to the transport system. The chain is sn-glycerol-3-phosphate import ATP-binding protein UgpC from Burkholderia ambifaria (strain ATCC BAA-244 / DSM 16087 / CCUG 44356 / LMG 19182 / AMMD) (Burkholderia cepacia (strain AMMD)).